Here is a 156-residue protein sequence, read N- to C-terminus: ATP synthase subunit b (156 aa).

The helical transmembrane segment at 4-26 (GATFWGPMISFALFVWFTMKYVW) threads the bilayer.

It belongs to the ATPase B chain family. In terms of assembly, F-type ATPases have 2 components, F(1) - the catalytic core - and F(0) - the membrane proton channel. F(1) has five subunits: alpha(3), beta(3), gamma(1), delta(1), epsilon(1). F(0) has three main subunits: a(1), b(2) and c(10-14). The alpha and beta chains form an alternating ring which encloses part of the gamma chain. F(1) is attached to F(0) by a central stalk formed by the gamma and epsilon chains, while a peripheral stalk is formed by the delta and b chains.

It localises to the cell inner membrane. Functionally, f(1)F(0) ATP synthase produces ATP from ADP in the presence of a proton or sodium gradient. F-type ATPases consist of two structural domains, F(1) containing the extramembraneous catalytic core and F(0) containing the membrane proton channel, linked together by a central stalk and a peripheral stalk. During catalysis, ATP synthesis in the catalytic domain of F(1) is coupled via a rotary mechanism of the central stalk subunits to proton translocation. In terms of biological role, component of the F(0) channel, it forms part of the peripheral stalk, linking F(1) to F(0). The chain is ATP synthase subunit b from Alkalilimnicola ehrlichii (strain ATCC BAA-1101 / DSM 17681 / MLHE-1).